A 920-amino-acid polypeptide reads, in one-letter code: 2-oxoglutarate dehydrogenase E1 component (920 aa).

Belongs to the alpha-ketoglutarate dehydrogenase family. In terms of assembly, homodimer. Part of the 2-oxoglutarate dehydrogenase (OGDH) complex composed of E1 (2-oxoglutarate dehydrogenase), E2 (dihydrolipoamide succinyltransferase) and E3 (dihydrolipoamide dehydrogenase); the complex contains multiple copies of the three enzymatic components (E1, E2 and E3). Thiamine diphosphate serves as cofactor.

It catalyses the reaction N(6)-[(R)-lipoyl]-L-lysyl-[protein] + 2-oxoglutarate + H(+) = N(6)-[(R)-S(8)-succinyldihydrolipoyl]-L-lysyl-[protein] + CO2. E1 component of the 2-oxoglutarate dehydrogenase (OGDH) complex which catalyzes the decarboxylation of 2-oxoglutarate, the first step in the conversion of 2-oxoglutarate to succinyl-CoA and CO(2). The chain is 2-oxoglutarate dehydrogenase E1 component from Leptospira interrogans serogroup Icterohaemorrhagiae serovar copenhageni (strain Fiocruz L1-130).